The primary structure comprises 153 residues: MSLDLALDIQHATTCDWLPTDEQFALWATTAIGNSMDEAELTIRIVDTRESQMLNSTYRGKDKPTNVLSFPFEAPPEIELPLLGDLVICAAVVENEAREQQKTLEAHWAHMVVHGCLHLLGYDHIEDEEAEEMESLETQLIEGLGFTDPYKEQ.

Zn(2+)-binding residues include His-114, His-118, and His-124.

The protein belongs to the endoribonuclease YbeY family. Requires Zn(2+) as cofactor.

It localises to the cytoplasm. Functionally, single strand-specific metallo-endoribonuclease involved in late-stage 70S ribosome quality control and in maturation of the 3' terminus of the 16S rRNA. The sequence is that of Endoribonuclease YbeY from Shewanella baltica (strain OS155 / ATCC BAA-1091).